The chain runs to 299 residues: Tyrosine recombinase XerC (299 aa).

One can recognise a Core-binding (CB) domain in the interval M1–Q81. In terms of domain architecture, Tyr recombinase spans L102–D281. Active-site residues include R142, K166, H233, R236, and H259. Catalysis depends on Y268, which acts as the O-(3'-phospho-DNA)-tyrosine intermediate.

Belongs to the 'phage' integrase family. XerC subfamily. Forms a cyclic heterotetrameric complex composed of two molecules of XerC and two molecules of XerD.

The protein resides in the cytoplasm. Its function is as follows. Site-specific tyrosine recombinase, which acts by catalyzing the cutting and rejoining of the recombining DNA molecules. The XerC-XerD complex is essential to convert dimers of the bacterial chromosome into monomers to permit their segregation at cell division. It also contributes to the segregational stability of plasmids. This Chromobacterium violaceum (strain ATCC 12472 / DSM 30191 / JCM 1249 / CCUG 213 / NBRC 12614 / NCIMB 9131 / NCTC 9757 / MK) protein is Tyrosine recombinase XerC.